Here is a 373-residue protein sequence, read N- to C-terminus: Ras association domain-containing protein 7 (373 aa).

Residues 6 to 89 form the Ras-associating domain; sequence AAMELKVWVD…VQFVLRRTGP (84 aa). The disordered stretch occupies residues 122-150; sequence CEPRKTLTPEPAPSLSRPGPAAPVTPTPG. Coiled-coil stretches lie at residues 175-227 and 248-297; these read WEQE…AAEA and QERQ…QFIQ. The interval 300-356 is disordered; that stretch reads GAALPPPPRPDRGPPGTQGPLPPAREESLLGAPSESHAGAQPRPRGGPHDAELLEVA.

Interacts with MAP2K7 and GTP-bound NRAS. Post-translationally, polyubiquitinated and degraded by the proteasome upon prolonged stress stimuli.

Its subcellular location is the cytoplasm. It is found in the cytoskeleton. The protein resides in the microtubule organizing center. It localises to the centrosome. Its function is as follows. Negatively regulates stress-induced JNK activation and apoptosis by promoting MAP2K7 phosphorylation and inhibiting its ability to activate JNK. Following prolonged stress, anti-apoptotic effect stops because of degradation of RASSF7 protein via the ubiquitin-proteasome pathway. Required for the activation of AURKB and chromosomal congression during mitosis where it stimulates microtubule polymerization. The protein is Ras association domain-containing protein 7 (RASSF7) of Homo sapiens (Human).